We begin with the raw amino-acid sequence, 356 residues long: Histidinol-phosphate aminotransferase (356 aa).

An N6-(pyridoxal phosphate)lysine modification is found at lysine 214.

This sequence belongs to the class-II pyridoxal-phosphate-dependent aminotransferase family. Histidinol-phosphate aminotransferase subfamily. As to quaternary structure, homodimer. It depends on pyridoxal 5'-phosphate as a cofactor.

It catalyses the reaction L-histidinol phosphate + 2-oxoglutarate = 3-(imidazol-4-yl)-2-oxopropyl phosphate + L-glutamate. The protein operates within amino-acid biosynthesis; L-histidine biosynthesis; L-histidine from 5-phospho-alpha-D-ribose 1-diphosphate: step 7/9. The protein is Histidinol-phosphate aminotransferase of Escherichia coli O81 (strain ED1a).